The sequence spans 197 residues: MQRASRLKRELHMLATEPPPGITCWQDKDQMDDLRAQILGGANTPYEKGVFKLEVIIPERYPFEPPQIRFLTPIYHPNIDSAGRICLDVLKLPPKGAWRPSLNIATVLTSIQLLMSEPNPDDPLMADISSEFKYNKPAFLKNARQWTEKHARQKQKADEEEMLDNLPEAGDSRVHNSTQKRKASQLVGIEKKFHPDV.

Residues 2-152 (QRASRLKREL…ARQWTEKHAR (151 aa)) enclose the UBC core domain. Cys-86 (glycyl thioester intermediate) is an active-site residue. Glycyl lysine isopeptide (Lys-Gly) (interchain with G-Cter in ubiquitin) cross-links involve residues Lys-91 and Lys-182. Residues 149–197 (KHARQKQKADEEEMLDNLPEAGDSRVHNSTQKRKASQLVGIEKKFHPDV) are disordered. Ser-184 bears the Phosphoserine mark. Glycyl lysine isopeptide (Lys-Gly) (interchain with G-Cter in SUMO2) cross-links involve residues Lys-191 and Lys-192.

Belongs to the ubiquitin-conjugating enzyme family. In terms of assembly, directly interacts with FANCL. Interacts with BRCA1. In terms of processing, auto-ubiquitinated. Effects of auto-monoubiquitination at Lys-91 and Lys-182 are unclear: according to a report, monoubiquitination inactivates E2 enzyme activity. In contrast, according to another report, autoubiquitination does not affect E2 enzyme activity.

It is found in the nucleus. It catalyses the reaction S-ubiquitinyl-[E1 ubiquitin-activating enzyme]-L-cysteine + [E2 ubiquitin-conjugating enzyme]-L-cysteine = [E1 ubiquitin-activating enzyme]-L-cysteine + S-ubiquitinyl-[E2 ubiquitin-conjugating enzyme]-L-cysteine.. Its pathway is protein modification; protein ubiquitination. Accepts ubiquitin from the E1 complex and catalyzes its covalent attachment to other proteins. Catalyzes monoubiquitination. Involved in mitomycin-C (MMC)-induced DNA repair. Acts as a specific E2 ubiquitin-conjugating enzyme for the Fanconi anemia complex by associating with E3 ubiquitin-protein ligase FANCL and catalyzing monoubiquitination of FANCD2, a key step in the DNA damage pathway. Also mediates monoubiquitination of FANCL and FANCI. May contribute to ubiquitination and degradation of BRCA1. In vitro able to promote polyubiquitination using all 7 ubiquitin Lys residues, but may prefer 'Lys-11'-, 'Lys-27'-, 'Lys-48'- and 'Lys-63'-linked polyubiquitination. This is Ubiquitin-conjugating enzyme E2 T (UBE2T) from Homo sapiens (Human).